A 186-amino-acid chain; its full sequence is Elongation factor P (186 aa).

It belongs to the elongation factor P family.

The protein resides in the cytoplasm. Its pathway is protein biosynthesis; polypeptide chain elongation. In terms of biological role, involved in peptide bond synthesis. Stimulates efficient translation and peptide-bond synthesis on native or reconstituted 70S ribosomes in vitro. Probably functions indirectly by altering the affinity of the ribosome for aminoacyl-tRNA, thus increasing their reactivity as acceptors for peptidyl transferase. This Prochlorococcus marinus subsp. pastoris (strain CCMP1986 / NIES-2087 / MED4) protein is Elongation factor P.